The primary structure comprises 91 residues: GWPAYPGSNGIRSSVCQKKLGCGSKNLASLGVCKAFCLGRKRFWQKCGKNGSSGKGSRICNPVLAHAVEKAGKGLIKVTDMAVATIIKFAG.

3 disulfide bridges follow: Cys16/Cys37, Cys22/Cys33, and Cys47/Cys60.

Belongs to the worm cytolysin family. In terms of tissue distribution, localized within the skin and proboscis and are most readily isolated from body mucus secretions.

It is found in the secreted. Functionally, cytolysin that shows hemolytic activity (on bovine erythrocytes, HC(50)=5.75 mg/ml). This hemolytic activity is completely inhibited by small unilamelar vesicles composed of PC/PG, PC/PI and PC/PS in 1:1 molar ratios (with at least 100 mg/ml concentration). This is Parbolysin P6 from Parborlasia corrugatus (Antarctic nemertean worm).